The chain runs to 132 residues: Small ribosomal subunit protein uS8 (132 aa).

This sequence belongs to the universal ribosomal protein uS8 family. Part of the 30S ribosomal subunit. Contacts proteins S5 and S12.

Its function is as follows. One of the primary rRNA binding proteins, it binds directly to 16S rRNA central domain where it helps coordinate assembly of the platform of the 30S subunit. The chain is Small ribosomal subunit protein uS8 from Rhizobium rhizogenes (strain K84 / ATCC BAA-868) (Agrobacterium radiobacter).